The primary structure comprises 151 residues: Putative pre-16S rRNA nuclease (151 aa).

Belongs to the YqgF nuclease family.

Its subcellular location is the cytoplasm. Could be a nuclease involved in processing of the 5'-end of pre-16S rRNA. The chain is Putative pre-16S rRNA nuclease from Prochlorococcus marinus (strain MIT 9515).